A 72-amino-acid polypeptide reads, in one-letter code: UPF0495 protein KLLA0D04334g (72 aa).

The helical transmembrane segment at 20 to 42 (PVELTPLFLAMGVALASGTWFSY) threads the bilayer.

It belongs to the UPF0495 family.

The protein resides in the membrane. This is UPF0495 protein KLLA0D04334g from Kluyveromyces lactis (strain ATCC 8585 / CBS 2359 / DSM 70799 / NBRC 1267 / NRRL Y-1140 / WM37) (Yeast).